The chain runs to 372 residues: Glutamate 5-kinase (372 aa).

An ATP-binding site is contributed by Lys-14. Substrate-binding residues include Ser-54, Asp-141, and Asn-153. ATP is bound by residues 173-174 (TD) and 215-221 (TGGMATK). In terms of domain architecture, PUA spans 280 to 358 (RGKLILDQGA…DDIESLLGYD (79 aa)).

This sequence belongs to the glutamate 5-kinase family.

It localises to the cytoplasm. The enzyme catalyses L-glutamate + ATP = L-glutamyl 5-phosphate + ADP. Its pathway is amino-acid biosynthesis; L-proline biosynthesis; L-glutamate 5-semialdehyde from L-glutamate: step 1/2. Its function is as follows. Catalyzes the transfer of a phosphate group to glutamate to form L-glutamate 5-phosphate. The protein is Glutamate 5-kinase of Shewanella sediminis (strain HAW-EB3).